Consider the following 454-residue polypeptide: 5-hydroxytryptamine receptor 3D (454 aa).

The signal sequence occupies residues 1 to 24 (MQKHSPGPPALALLSQSLLTTGNG). The Extracellular segment spans residues 25–232 (DTLIINCPGF…IRRRCRPSPY (208 aa)). N-linked (GlcNAc...) asparagine glycosylation is present at Asn-66. A helical membrane pass occupies residues 233 to 253 (VVNFLVPSGILIAIDALSFYL). Residues 254-264 (PLESGNCAPFK) are Cytoplasmic-facing. The chain crosses the membrane as a helical span at residues 265-285 (MTVLLGYSVFLLMMNDLLPAT). The Extracellular segment spans residues 286–306 (STSSHASLVAPLALMQTPLPA). A helical transmembrane segment spans residues 307 to 327 (GVYFALCLSLMVGSLLETIFI). Residues 328 to 431 (THLLHVATTQ…WVQFSHAMDA (104 aa)) lie on the Cytoplasmic side of the membrane. Residues 363-410 (PQKGNKGPGLTPTHLPGVKEPEVSAGQMPGPGEAELTGGSEWTRAQRE) are disordered. Positions 399–430 (TGGSEWTRAQREHEAQKQHSVELWVQFSHAMD) are HA-stretch; determines single-channel conductance in 5-HT3 receptors. Residues 432–452 (LLFRLYLLFMASSIITVICLW) form a helical membrane-spanning segment. Residues 453-454 (NT) are Extracellular-facing.

It belongs to the ligand-gated ion channel (TC 1.A.9) family. 5-hydroxytryptamine receptor (TC 1.A.9.2) subfamily. HTR3D sub-subfamily. In terms of assembly, forms homopentameric as well as heteropentameric serotonin-activated cation-selective channel complexes with HTR3A. The homomeric complex is not functional. Heteropentameric complexes display properties which resemble that of neuronal serotonin-activated channels in vivo. As to expression, expressed in liver, as well as fetal and adult colon and kidney.

It is found in the postsynaptic cell membrane. It localises to the cell membrane. The enzyme catalyses Na(+)(in) = Na(+)(out). The catalysed reaction is K(+)(in) = K(+)(out). It carries out the reaction Ca(2+)(in) = Ca(2+)(out). Functionally, forms serotonin (5-hydroxytryptamine/5-HT3)-activated cation-selective channel complexes, which when activated cause fast, depolarizing responses in neurons. The protein is 5-hydroxytryptamine receptor 3D of Homo sapiens (Human).